A 301-amino-acid polypeptide reads, in one-letter code: tRNA dimethylallyltransferase (301 aa).

9–16 (GPTASGKS) provides a ligand contact to ATP. Residue 11–16 (TASGKS) participates in substrate binding. The interaction with substrate tRNA stretch occupies residues 34–37 (DSMQ).

Belongs to the IPP transferase family. In terms of assembly, monomer. Mg(2+) is required as a cofactor.

The enzyme catalyses adenosine(37) in tRNA + dimethylallyl diphosphate = N(6)-dimethylallyladenosine(37) in tRNA + diphosphate. Its function is as follows. Catalyzes the transfer of a dimethylallyl group onto the adenine at position 37 in tRNAs that read codons beginning with uridine, leading to the formation of N6-(dimethylallyl)adenosine (i(6)A). This is tRNA dimethylallyltransferase from Corynebacterium glutamicum (strain R).